A 485-amino-acid polypeptide reads, in one-letter code: NADH-quinone oxidoreductase subunit N (485 aa).

The next 14 helical transmembrane spans lie at 8-28, 35-55, 71-91, 105-125, 127-147, 159-179, 203-223, 235-255, 271-291, 297-317, 326-346, 373-393, 408-430, and 455-475; these read LIAL…MLSI, FLNA…LWFV, GFAM…CTFA, FYLL…ANHL, ALFL…GYAF, YTIL…LVYA, LLAG…LVPF, PAPV…GVVM, VVLG…ALSQ, LLGY…IALQ, VGVY…VVSL, AAVM…LGFI, WWLV…RVAV, and IVVL…QPLI.

The protein belongs to the complex I subunit 2 family. NDH-1 is composed of 13 different subunits. Subunits NuoA, H, J, K, L, M, N constitute the membrane sector of the complex.

Its subcellular location is the cell inner membrane. The enzyme catalyses a quinone + NADH + 5 H(+)(in) = a quinol + NAD(+) + 4 H(+)(out). Its function is as follows. NDH-1 shuttles electrons from NADH, via FMN and iron-sulfur (Fe-S) centers, to quinones in the respiratory chain. The immediate electron acceptor for the enzyme in this species is believed to be ubiquinone. Couples the redox reaction to proton translocation (for every two electrons transferred, four hydrogen ions are translocated across the cytoplasmic membrane), and thus conserves the redox energy in a proton gradient. The protein is NADH-quinone oxidoreductase subunit N of Salmonella typhimurium (strain LT2 / SGSC1412 / ATCC 700720).